The following is a 650-amino-acid chain: Probable acyl-CoA dehydrogenase FadE10 (650 aa).

Residues 1–23 are disordered; that stretch reads MAQQTQVTEEQARALAEESRESG. Positions 10–23 are enriched in basic and acidic residues; it reads EQARALAEESRESG. The active-site Proton acceptor is Glu-422.

The protein belongs to the acyl-CoA dehydrogenase family. Requires FAD as cofactor.

It catalyses the reaction a 2,3-saturated acyl-CoA + A = a 2,3-dehydroacyl-CoA + AH2. The polypeptide is Probable acyl-CoA dehydrogenase FadE10 (fadE10) (Mycobacterium tuberculosis (strain CDC 1551 / Oshkosh)).